Reading from the N-terminus, the 342-residue chain is Holliday junction branch migration complex subunit RuvB (342 aa).

The interval 1 to 179 (MTSILSPEKS…FGIPMRLNFY (179 aa)) is large ATPase domain (RuvB-L). ATP contacts are provided by residues Leu-18, Arg-19, Gly-60, Lys-63, Thr-64, Thr-65, 126–128 (EDF), Arg-169, Tyr-179, and Arg-216. Residue Thr-64 coordinates Mg(2+). The tract at residues 180-250 (NTEELKKVLN…IANFGLNRLE (71 aa)) is small ATPAse domain (RuvB-S). Residues 253 to 342 (IIGLDSNDYR…HQFNIFNDNE (90 aa)) form a head domain (RuvB-H) region. 3 residues coordinate DNA: Arg-289, Arg-308, and Arg-313.

The protein belongs to the RuvB family. As to quaternary structure, homohexamer. Forms an RuvA(8)-RuvB(12)-Holliday junction (HJ) complex. HJ DNA is sandwiched between 2 RuvA tetramers; dsDNA enters through RuvA and exits via RuvB. An RuvB hexamer assembles on each DNA strand where it exits the tetramer. Each RuvB hexamer is contacted by two RuvA subunits (via domain III) on 2 adjacent RuvB subunits; this complex drives branch migration. In the full resolvosome a probable DNA-RuvA(4)-RuvB(12)-RuvC(2) complex forms which resolves the HJ.

The protein resides in the cytoplasm. The catalysed reaction is ATP + H2O = ADP + phosphate + H(+). The RuvA-RuvB-RuvC complex processes Holliday junction (HJ) DNA during genetic recombination and DNA repair, while the RuvA-RuvB complex plays an important role in the rescue of blocked DNA replication forks via replication fork reversal (RFR). RuvA specifically binds to HJ cruciform DNA, conferring on it an open structure. The RuvB hexamer acts as an ATP-dependent pump, pulling dsDNA into and through the RuvAB complex. RuvB forms 2 homohexamers on either side of HJ DNA bound by 1 or 2 RuvA tetramers; 4 subunits per hexamer contact DNA at a time. Coordinated motions by a converter formed by DNA-disengaged RuvB subunits stimulates ATP hydrolysis and nucleotide exchange. Immobilization of the converter enables RuvB to convert the ATP-contained energy into a lever motion, pulling 2 nucleotides of DNA out of the RuvA tetramer per ATP hydrolyzed, thus driving DNA branch migration. The RuvB motors rotate together with the DNA substrate, which together with the progressing nucleotide cycle form the mechanistic basis for DNA recombination by continuous HJ branch migration. Branch migration allows RuvC to scan DNA until it finds its consensus sequence, where it cleaves and resolves cruciform DNA. The sequence is that of Holliday junction branch migration complex subunit RuvB from Rickettsia bellii (strain RML369-C).